Here is a 158-residue protein sequence, read N- to C-terminus: Snaclec agglucetin subunit alpha-2 (158 aa).

Positions 1 to 23 (MGRFIFVSFGLLVVFLSLSGTGA) are cleaved as a signal peptide. Disulfide bonds link Cys27–Cys38, Cys55–Cys152, and Cys127–Cys144. Positions 34–153 (YDQYCYQVIK…CIQLNPFVCK (120 aa)) constitute a C-type lectin domain.

It belongs to the snaclec family. In terms of assembly, heterotetramer of the subunits alpha-1, alpha-2, beta-1 and beta-2; disulfide-linked. In terms of tissue distribution, expressed by the venom gland.

It is found in the secreted. Agglucetin specifically causes platelet aggregation and surface exposure of integrin alpha-IIb/beta-3 with a GPIb-(GP1BA-) dependent manner in washed platelets. It binds to human platelets in a saturable manner, and its binding is specifically blocked by anti-GP Ib mAb. It regulates endothelial cell survival and promotes angiogenesis by activating integrin alpha-v/beta-3 signaling through FAK/phosphatidylinositol 3-kinase (PI3K)/Akt pathway. This is Snaclec agglucetin subunit alpha-2 from Deinagkistrodon acutus (Hundred-pace snake).